A 274-amino-acid chain; its full sequence is Eukaryotic translation initiation factor 3 subunit G (274 aa).

3 positions are modified to phosphoserine: Ser146, Ser164, and Ser171. Positions 149 to 170 (ANTSAAATPEPDTDASGKYVPP) are disordered. An RRM domain is found at 191-270 (TTLKISQLNT…LILHLEWPKK (80 aa)).

The protein belongs to the eIF-3 subunit G family. In terms of assembly, component of the eukaryotic translation initiation factor 3 (eIF-3) complex.

The protein resides in the cytoplasm. Its function is as follows. RNA-binding component of the eukaryotic translation initiation factor 3 (eIF-3) complex, which is involved in protein synthesis of a specialized repertoire of mRNAs and, together with other initiation factors, stimulates binding of mRNA and methionyl-tRNAi to the 40S ribosome. The eIF-3 complex specifically targets and initiates translation of a subset of mRNAs involved in cell proliferation. This subunit can bind 18S rRNA. The sequence is that of Eukaryotic translation initiation factor 3 subunit G from Meyerozyma guilliermondii (strain ATCC 6260 / CBS 566 / DSM 6381 / JCM 1539 / NBRC 10279 / NRRL Y-324) (Yeast).